A 314-amino-acid polypeptide reads, in one-letter code: tRNA dimethylallyltransferase (314 aa).

13 to 20 is a binding site for ATP; sequence GPTAIGKT. Residue 15–20 participates in substrate binding; it reads TAIGKT. Residues 38 to 41 are interaction with substrate tRNA; that stretch reads DSMQ.

The protein belongs to the IPP transferase family. Monomer. Mg(2+) is required as a cofactor.

The catalysed reaction is adenosine(37) in tRNA + dimethylallyl diphosphate = N(6)-dimethylallyladenosine(37) in tRNA + diphosphate. Functionally, catalyzes the transfer of a dimethylallyl group onto the adenine at position 37 in tRNAs that read codons beginning with uridine, leading to the formation of N6-(dimethylallyl)adenosine (i(6)A). The protein is tRNA dimethylallyltransferase of Desulfotalea psychrophila (strain LSv54 / DSM 12343).